Consider the following 434-residue polypeptide: Bestrophin homolog 12 (434 aa).

The next 4 membrane-spanning stretches (helical) occupy residues 31 to 51 (KVILHEFLMTAGAYFGVFLVF), 76 to 96 (VCIPMQMMLAFFIATVADQWE), 244 to 264 (IPIPLAYPQAVFLAVRIYFFF), and 278 to 298 (WALSHWGFPLLTTLQFIFLVG).

It belongs to the anion channel-forming bestrophin (TC 1.A.46) family. Calcium-sensitive chloride channel subfamily. In terms of assembly, forms oligomers.

The protein resides in the cell membrane. Its function is as follows. Forms chloride channels. In Caenorhabditis elegans, this protein is Bestrophin homolog 12 (best-12).